The chain runs to 526 residues: D-arabinono-1,4-lactone oxidase (526 aa).

In terms of domain architecture, FAD-binding PCMH-type spans 22–196; the sequence is FWSRPSLYFQ…VYATLRTVPA (175 aa). Position 59 is a pros-8alpha-FAD histidine (His59).

This sequence belongs to the oxygen-dependent FAD-linked oxidoreductase family. FAD serves as cofactor.

It is found in the mitochondrion membrane. The enzyme catalyses D-arabinono-1,4-lactone + O2 = dehydro-D-arabinono-1,4-lactone + H2O2 + H(+). Its pathway is cofactor biosynthesis; D-erythroascorbate biosynthesis; dehydro-D-arabinono-1,4-lactone from D-arabinose: step 2/2. The chain is D-arabinono-1,4-lactone oxidase (ALO1) from Yarrowia lipolytica (strain CLIB 122 / E 150) (Yeast).